The chain runs to 123 residues: Signal recognition particle 14 kDa protein (123 aa).

Residues 99 to 123 (KKKPTPTTTPSSSTTAKTAAKKTKV) form a disordered region. The segment covering 103–116 (TPTTTPSSSTTAKT) has biased composition (low complexity).

It belongs to the SRP14 family. Heterodimer with srp9; binds RNA as heterodimer. Component of a signal recognition particle (SRP) complex that consists of a 7SL RNA molecule and six protein subunits: srp72, srp68, srp54, srp19, srp14 and srp9.

The protein resides in the cytoplasm. Its function is as follows. Component of the signal recognition particle (SRP) complex, a ribonucleoprotein complex that mediates the cotranslational targeting of secretory and membrane proteins to the endoplasmic reticulum (ER). Srp9 together with srp14 and the Alu portion of the SRP RNA, constitutes the elongation arrest domain of SRP. The complex of srp9 and srp14 is required for SRP RNA binding. The polypeptide is Signal recognition particle 14 kDa protein (srp14-1) (Dictyostelium discoideum (Social amoeba)).